The following is a 380-amino-acid chain: Cytochrome b (380 aa).

4 helical membrane-spanning segments follow: residues 34–54 (FGSL…LLAM), 78–99 (WLIR…YLHI), 114–134 (WNVG…GYVL), and 179–199 (FFAL…VHLT). His84 and His98 together coordinate heme b. 2 residues coordinate heme b: His183 and His197. A ubiquinone is bound at residue His202. Transmembrane regions (helical) follow at residues 227–247 (IKDI…ALFS), 289–309 (LGGV…PLLH), 321–341 (LSQI…WIGS), and 348–368 (FIII…VLFP).

The protein belongs to the cytochrome b family. In terms of assembly, the cytochrome bc1 complex contains 11 subunits: 3 respiratory subunits (MT-CYB, CYC1 and UQCRFS1), 2 core proteins (UQCRC1 and UQCRC2) and 6 low-molecular weight proteins (UQCRH/QCR6, UQCRB/QCR7, UQCRQ/QCR8, UQCR10/QCR9, UQCR11/QCR10 and a cleavage product of UQCRFS1). This cytochrome bc1 complex then forms a dimer. It depends on heme b as a cofactor.

Its subcellular location is the mitochondrion inner membrane. In terms of biological role, component of the ubiquinol-cytochrome c reductase complex (complex III or cytochrome b-c1 complex) that is part of the mitochondrial respiratory chain. The b-c1 complex mediates electron transfer from ubiquinol to cytochrome c. Contributes to the generation of a proton gradient across the mitochondrial membrane that is then used for ATP synthesis. This chain is Cytochrome b (MT-CYB), found in Vireo olivaceus (Red-eyed vireo).